The sequence spans 401 residues: Exodeoxyribonuclease 7 large subunit (401 aa).

This sequence belongs to the XseA family. Heterooligomer composed of large and small subunits.

It is found in the cytoplasm. The enzyme catalyses Exonucleolytic cleavage in either 5'- to 3'- or 3'- to 5'-direction to yield nucleoside 5'-phosphates.. Bidirectionally degrades single-stranded DNA into large acid-insoluble oligonucleotides, which are then degraded further into small acid-soluble oligonucleotides. This Clostridium botulinum (strain Loch Maree / Type A3) protein is Exodeoxyribonuclease 7 large subunit.